A 207-amino-acid polypeptide reads, in one-letter code: Ribosomal RNA small subunit methyltransferase G (207 aa).

S-adenosyl-L-methionine is bound by residues Gly73, Leu78, 124-125, and Arg139; that span reads VE.

Belongs to the methyltransferase superfamily. RNA methyltransferase RsmG family.

The protein resides in the cytoplasm. It catalyses the reaction guanosine(527) in 16S rRNA + S-adenosyl-L-methionine = N(7)-methylguanosine(527) in 16S rRNA + S-adenosyl-L-homocysteine. In terms of biological role, specifically methylates the N7 position of guanine in position 527 of 16S rRNA. The protein is Ribosomal RNA small subunit methyltransferase G of Enterobacter sp. (strain 638).